The chain runs to 436 residues: Serine--tRNA ligase (436 aa).

241 to 243 provides a ligand contact to L-serine; sequence TSE. Residue 272-274 coordinates ATP; the sequence is RAE. Glutamate 295 provides a ligand contact to L-serine. 359-362 is a binding site for ATP; that stretch reads EISS. Serine 395 is an L-serine binding site.

This sequence belongs to the class-II aminoacyl-tRNA synthetase family. Type-1 seryl-tRNA synthetase subfamily. Homodimer. The tRNA molecule binds across the dimer.

The protein localises to the cytoplasm. The catalysed reaction is tRNA(Ser) + L-serine + ATP = L-seryl-tRNA(Ser) + AMP + diphosphate + H(+). It carries out the reaction tRNA(Sec) + L-serine + ATP = L-seryl-tRNA(Sec) + AMP + diphosphate + H(+). Its pathway is aminoacyl-tRNA biosynthesis; selenocysteinyl-tRNA(Sec) biosynthesis; L-seryl-tRNA(Sec) from L-serine and tRNA(Sec): step 1/1. Functionally, catalyzes the attachment of serine to tRNA(Ser). Is also able to aminoacylate tRNA(Sec) with serine, to form the misacylated tRNA L-seryl-tRNA(Sec), which will be further converted into selenocysteinyl-tRNA(Sec). This chain is Serine--tRNA ligase, found in Beijerinckia indica subsp. indica (strain ATCC 9039 / DSM 1715 / NCIMB 8712).